The chain runs to 64 residues: Large ribosomal subunit protein uL29 (64 aa).

The protein belongs to the universal ribosomal protein uL29 family.

The protein is Large ribosomal subunit protein uL29 of Dichelobacter nodosus (strain VCS1703A).